A 613-amino-acid polypeptide reads, in one-letter code: MPDFILTIDSDEEVDVSDSEQLQDINPDFKFQIDGETTNTLEEFDFQENKVKEVDLDEIIKKKGGLKEESDDEELALDGFGMGASKQEEEEEEEEEEVEVPEVKEVVEPEDSAEAIADFYEESSPQQTHTSFQTLQLSRPVLKGIAELKFTKPTPIQSASIPIALLGKDIVAGAQTGSGKTGAYMIPIIERLLYKPSTSTKVIILTPTRELALQVYEFGKKLSHHVNNLNIGLAVGGLNLRQQEEQLKTRPDIVIATPGRLIDHIRNSPSFSVQDIQVLVIDEADRMLEEGFQDELTEILSLIPKHKRQTLLFSATMNTRIQDLIQLSLQKPVRIMIDPPKSVASKLLQQFVRIRKRDQLKPALLYQLLKGVSSRVVVFVARKETAHRLRIVLGLLGLKVSELHGALTQEQRLQNVKNFKSLEVPVLICTDLAARGLDIPKIELVINYDMPKTFEIYLHRVGRTARAGRDGTSITFVGESSQERAIVKSAIVNGKGVAKTVDWKQAEETNKLLESKESVIDEVLEEEKEAKELLRAEMELTKASNLIKHEQEIHSRPKRTWFKGEVMEQLTKHGKKVNSKKRKANEVRKDEGRSYKKTKTDRMKISNKKKSKK.

Disordered regions lie at residues 1 to 20 (MPDFILTIDSDEEVDVSDSE) and 79 to 104 (GFGMGASKQEEEEEEEEEEVEVPEVK). 2 stretches are compositionally biased toward acidic residues: residues 9 to 18 (DSDEEVDVSD) and 88 to 100 (EEEEEEEEEEVEV). The Q motif motif lies at 130 to 158 (TSFQTLQLSRPVLKGIAELKFTKPTPIQS). One can recognise a Helicase ATP-binding domain in the interval 161 to 335 (IPIALLGKDI…QLSLQKPVRI (175 aa)). 174-181 (AQTGSGKT) serves as a coordination point for ATP. The DEAD box signature appears at 282–285 (DEAD). The Helicase C-terminal domain occupies 364-541 (LLYQLLKGVS…ELLRAEMELT (178 aa)). The stretch at 504-552 (KQAEETNKLLESKESVIDEVLEEEKEAKELLRAEMELTKASNLIKHEQE) forms a coiled coil. Residues 571-613 (TKHGKKVNSKKRKANEVRKDEGRSYKKTKTDRMKISNKKKSKK) are disordered. Over residues 572–583 (KHGKKVNSKKRK) the composition is skewed to basic residues. Basic and acidic residues predominate over residues 584–604 (ANEVRKDEGRSYKKTKTDRMK).

This sequence belongs to the DEAD box helicase family. DDX27/DRS1 subfamily. Associates with pre-ribosomal particles.

It is found in the nucleus. Its subcellular location is the nucleolus. The catalysed reaction is ATP + H2O = ADP + phosphate + H(+). Its function is as follows. ATP-binding RNA helicase involved in ribosome assembly. The polypeptide is ATP-dependent RNA helicase DRS1 (DRS1) (Candida albicans (strain SC5314 / ATCC MYA-2876) (Yeast)).